The sequence spans 458 residues: Bifunctional protein GlmU (458 aa).

The pyrophosphorylase stretch occupies residues 1-228; that stretch reads MHPKLDILIL…DWEVLGVNSK (228 aa). Residues 10–13, Lys24, Gln75, 80–81, 102–104, Gly139, Glu153, Asn168, and Asn226 contribute to the UDP-N-acetyl-alpha-D-glucosamine site; these read LAAG, GT, and YGD. Asp104 contributes to the Mg(2+) binding site. Position 226 (Asn226) interacts with Mg(2+). The segment at 229–249 is linker; the sequence is AQLAELERIHQNEVAQRLLAD. Positions 250-458 are N-acetyltransferase; that stretch reads GVTLMDPARL…KRPIKPKKEG (209 aa). The UDP-N-acetyl-alpha-D-glucosamine site is built by Arg332 and Lys350. Residue His362 is the Proton acceptor of the active site. Positions 365 and 376 each coordinate UDP-N-acetyl-alpha-D-glucosamine. Residues Ala379, 385 to 386, Ser404, Ala422, and Arg439 each bind acetyl-CoA; that span reads NY.

The protein in the N-terminal section; belongs to the N-acetylglucosamine-1-phosphate uridyltransferase family. This sequence in the C-terminal section; belongs to the transferase hexapeptide repeat family. In terms of assembly, homotrimer. Mg(2+) is required as a cofactor.

It is found in the cytoplasm. The enzyme catalyses alpha-D-glucosamine 1-phosphate + acetyl-CoA = N-acetyl-alpha-D-glucosamine 1-phosphate + CoA + H(+). It catalyses the reaction N-acetyl-alpha-D-glucosamine 1-phosphate + UTP + H(+) = UDP-N-acetyl-alpha-D-glucosamine + diphosphate. It participates in nucleotide-sugar biosynthesis; UDP-N-acetyl-alpha-D-glucosamine biosynthesis; N-acetyl-alpha-D-glucosamine 1-phosphate from alpha-D-glucosamine 6-phosphate (route II): step 2/2. It functions in the pathway nucleotide-sugar biosynthesis; UDP-N-acetyl-alpha-D-glucosamine biosynthesis; UDP-N-acetyl-alpha-D-glucosamine from N-acetyl-alpha-D-glucosamine 1-phosphate: step 1/1. Its pathway is bacterial outer membrane biogenesis; LPS lipid A biosynthesis. Its function is as follows. Catalyzes the last two sequential reactions in the de novo biosynthetic pathway for UDP-N-acetylglucosamine (UDP-GlcNAc). The C-terminal domain catalyzes the transfer of acetyl group from acetyl coenzyme A to glucosamine-1-phosphate (GlcN-1-P) to produce N-acetylglucosamine-1-phosphate (GlcNAc-1-P), which is converted into UDP-GlcNAc by the transfer of uridine 5-monophosphate (from uridine 5-triphosphate), a reaction catalyzed by the N-terminal domain. The chain is Bifunctional protein GlmU from Thiobacillus denitrificans (strain ATCC 25259 / T1).